The chain runs to 488 residues: Beta-1,3-glucan-binding protein (488 aa).

Residues 1-17 (MFVTFICFLACLTCSYG) form the signal peptide. Residues 18-135 (QPRAQQYVVP…GTPADTSLEP (118 aa)) form a binds to curdlan, laminarihexaose and laminarin. The complex formation with laminarin induces self-association of the complexes into a macro structure, likely containing six protein and three laminarin molecules. The macro structures may form a platform on a microbial surface for recruitment of downstream proteases, as a means of amplification of the initial signal of pathogen recognition for the activation of the phenoloxidase cascade region. A binds to curdlan, lipopolysaccharide and lipoteichoic acid, activates the phenoloxidase cascade and is resistant to proteolytic degradation by trypsin or chymotrypsin, but is not as effective as the full-length protein in aggregation of microorganisms region spans residues 18 to 198 (QPRAQQYVVP…LKDLANWEAE (181 aa)). Positions 24–123 (YVVPSAKLEA…GEWTVTEFVN (100 aa)) constitute a CBM39 domain. Residues 24–127 (YVVPSAKLEA…VTEFVNEDGT (104 aa)) are binds to laminarihexaose and laminarin. Residues Asp72, 99–101 (WTY), and Arg110 each bind substrate. The tract at residues 125-158 (DGTPADTSLEPTTAPTPVRPDQPNQPIPTHRPDP) is disordered. A compositionally biased stretch (polar residues) spans 129 to 139 (ADTSLEPTTAP). Pro residues predominate over residues 141 to 150 (PVRPDQPNQP). The region spanning 144 to 488 (PDQPNQPIPT…KVDYVRVYAL (345 aa)) is the GH16 domain. The interval 199-488 (VKFPEEPDYP…KVDYVRVYAL (290 aa)) is binds to laminarin, but not to curdlan, does not activate the phenoloxidase cascade, is susceptible to proteinase digestion by trypsin or chymotrypsin and does not cause aggregation of microorganisms. Residues Asn373 and Asn453 are each glycosylated (N-linked (GlcNAc...) asparagine).

This sequence belongs to the insect beta-1,3-glucan binding protein family. Monomer. Post-translationally, the N-terminus is blocked. In terms of tissue distribution, fat body and hemolymph.

It localises to the secreted. Its function is as follows. Involved in the recognition of invading microorganisms causing their aggregation. Activates the phenoloxidase cascade. Binds specifically to beta-1,3-glucan. Binds to curdlan, a linear water-insoluble beta-1,3-glucan polysaccharide, and to laminarin, a water-soluble beta-1,3-glucan polysaccharide containing beta-1,6 branches. Also binds to lipopolysaccharide and lipoteichoic acid. The sequence is that of Beta-1,3-glucan-binding protein from Plodia interpunctella (Indianmeal moth).